A 113-amino-acid chain; its full sequence is MAGLKDVVTREYTINLHKRLHGVSFKKRAPRAVKEIKKFAKLHMGTEDVRLAPELNQAIWKRGVKGVEYRLRLRISRKRNEEEDAKNPLFSYVEPVLVASAKGLQTVVVEEDA.

This sequence belongs to the eukaryotic ribosomal protein eL31 family. As to quaternary structure, component of the large ribosomal subunit (LSU). Mature yeast ribosomes consist of a small (40S) and a large (60S) subunit. The 40S small subunit contains 1 molecule of ribosomal RNA (18S rRNA) and 33 different proteins (encoded by 57 genes). The large 60S subunit contains 3 rRNA molecules (25S, 5.8S and 5S rRNA) and 46 different proteins (encoded by 81 genes).

It localises to the cytoplasm. Functionally, component of the ribosome, a large ribonucleoprotein complex responsible for the synthesis of proteins in the cell. The small ribosomal subunit (SSU) binds messenger RNAs (mRNAs) and translates the encoded message by selecting cognate aminoacyl-transfer RNA (tRNA) molecules. The large subunit (LSU) contains the ribosomal catalytic site termed the peptidyl transferase center (PTC), which catalyzes the formation of peptide bonds, thereby polymerizing the amino acids delivered by tRNAs into a polypeptide chain. The nascent polypeptides leave the ribosome through a tunnel in the LSU and interact with protein factors that function in enzymatic processing, targeting, and the membrane insertion of nascent chains at the exit of the ribosomal tunnel. This is Large ribosomal subunit protein eL31B from Saccharomyces cerevisiae (strain ATCC 204508 / S288c) (Baker's yeast).